The primary structure comprises 57 residues: Small ribosomal subunit protein eS27 (57 aa).

4 residues coordinate Zn(2+): cysteine 10, cysteine 13, cysteine 29, and cysteine 32. The C4-type zinc finger occupies 10–32; that stretch reads CPDCENEQSLFEKAASEVSCAVC.

It belongs to the eukaryotic ribosomal protein eS27 family. Part of the 30S ribosomal subunit. Requires Zn(2+) as cofactor.

In Haloarcula marismortui (strain ATCC 43049 / DSM 3752 / JCM 8966 / VKM B-1809) (Halobacterium marismortui), this protein is Small ribosomal subunit protein eS27.